Consider the following 302-residue polypeptide: Probable alpha-L-glutamate ligase (302 aa).

Residues 104–287 enclose the ATP-grasp domain; the sequence is MQLLSREGVG…VAGMIIEFIE (184 aa). ATP-binding positions include lysine 141, 178–179, aspartate 187, and 211–213; these read EF and RSN. Mg(2+) is bound by residues aspartate 248, glutamate 260, and asparagine 262. Residues aspartate 248, glutamate 260, and asparagine 262 each contribute to the Mn(2+) site.

This sequence belongs to the RimK family. Mg(2+) serves as cofactor. It depends on Mn(2+) as a cofactor.

This chain is Probable alpha-L-glutamate ligase, found in Halorhodospira halophila (strain DSM 244 / SL1) (Ectothiorhodospira halophila (strain DSM 244 / SL1)).